The chain runs to 145 residues: Histone H3-like centromeric protein A (145 aa).

Basic residues predominate over residues 1–19 (MPRHTSAHKRKPSTPRRRS). The interval 1 to 54 (MPRHTSAHKRKPSTPRRRSPPASLPPPAGSRTRRHSGPSGSSPRKKHKFRPGTR) is disordered. The residue at position 19 (Ser-19) is a Phosphoserine. An H3-like region spans residues 51–145 (PGTRALMEIR…ARRIRGVEHM (95 aa)).

The protein belongs to the histone H3 family. As to quaternary structure, component of centromeric nucleosomes, where DNA is wrapped around a histone octamer core. The octamer contains two molecules each of H2A, H2B, CENPA and H4 assembled in one CENPA-H4 heterotetramer and two H2A-H2B heterodimers. CENPA modulates the DNA-binding characteristics of nucleosomes so that protruding DNA ends have higher flexibility than in nucleosomes containing conventional histone H3.

It localises to the nucleus. The protein resides in the chromosome. Its subcellular location is the centromere. Functionally, histone H3-like nucleosomal protein that is specifically found in centromeric nucleosomes. Replaces conventional H3 in the nucleosome core of centromeric chromatin that serves as an assembly site for the inner kinetochore. The presence of CENPA subtly modifies the nucleosome structure and the way DNA is wrapped around the nucleosome and gives rise to protruding DNA ends that are less well-ordered and rigid compared to nucleosomes containing histone H3. May serve as an epigenetic mark that propagates centromere identity through replication and cell division. Required for recruitment and assembly of kinetochore proteins, and as a consequence required for progress through mitosis, chromosome segregation and cytokinesis. The protein is Histone H3-like centromeric protein A (cenpa) of Danio rerio (Zebrafish).